Consider the following 165-residue polypeptide: Destrin (165 aa).

N-acetylalanine is present on Ala-2. At Ser-3 the chain carries Phosphoserine. The region spanning 4-153 is the ADF-H domain; it reads GVQVADEVCR…NRTCIAEKLG (150 aa). Lys-19 bears the N6-acetyllysine mark. Residues 30-34 carry the Nuclear localization signal motif; sequence KKRKK.

This sequence belongs to the actin-binding proteins ADF family. ISGylated. As to expression, widely expressed. Not found in skeletal muscle.

Its function is as follows. Actin-depolymerizing protein. Severs actin filaments (F-actin) and binds to actin monomers (G-actin). Acts in a pH-independent manner. The sequence is that of Destrin (Dstn) from Mus musculus (Mouse).